We begin with the raw amino-acid sequence, 1321 residues long: Serine/threonine-protein kinase SIK3 (1321 aa).

Residues 1–59 (MAAAAASGAGGAAGAGTGGAGPAGRLLPPPAPGSPAAPAAVSPAAGQPRPPAPASRGPM) form a disordered region. The span at 8–22 (GAGGAAGAGTGGAGP) shows a compositional bias: gly residues. Residues 36-47 (AAPAAVSPAAGQ) show a composition bias toward low complexity. The 252-residue stretch at 66-317 (YEIDRTIGKG…MEQICKHKWM (252 aa)) folds into the Protein kinase domain. The residue at position 71 (Thr-71) is a Phosphothreonine. ATP is bound by residues 72 to 80 (IGKGNFAVV) and Lys-95. Residue Glu-113 is modified to Phosphothreonine. Asp-188 (proton acceptor) is an active-site residue. Residue Thr-221 is modified to Phosphothreonine; by LKB1. The 41-residue stretch at 344 to 384 (PLNEDVLLAMEDMGLDKEQTLQSLRSDAYDHYSAIYSLLCD) folds into the UBA domain. Thr-469 is modified (phosphothreonine). Residues Ser-551, Ser-591, and Ser-592 each carry the phosphoserine modification. The tract at residues 585 to 614 (TPVDEESSDGEPDQEAVQSSTYKDSNTLHL) is disordered. A compositionally biased stretch (acidic residues) spans 587-598 (VDEESSDGEPDQ). Over residues 600-613 (AVQSSTYKDSNTLH) the composition is skewed to polar residues. Phosphoserine is present on residues Ser-626 and Ser-647. Residues 727–772 (IQPSSPPPNHPNNHLFRQPSNSPPPMSSAMIQPHGAASSSQFQGLP) are disordered. Positions 763–772 (ASSSQFQGLP) are enriched in polar residues. Phosphoserine is present on Ser-866. Positions 894 to 945 (LFSDQSRGSPSSYSPSTGVGFSPTQALKVPPLDQFPTFPPSAHQQPPHYTTS) are disordered. The span at 896–909 (SDQSRGSPSSYSPS) shows a compositional bias: low complexity. Over residues 935-945 (AHQQPPHYTTS) the composition is skewed to polar residues. Residue Ser-978 is modified to Phosphoserine. Arg-986 bears the Omega-N-methylarginine mark. The span at 1256-1265 (SLMGSQQFQD) shows a compositional bias: polar residues. A disordered region spans residues 1256–1289 (SLMGSQQFQDGENEECGASLGGHEHPDLSDGSQH).

Belongs to the protein kinase superfamily. CAMK Ser/Thr protein kinase family. SNF1 subfamily. In terms of assembly, binds to and is activated by YWHAZ when phosphorylated on Thr-221. Interacts with 14-3-3 proteins. Interacts with HDAC4; this interaction leads to HDAC4 retention in the cytoplasm. Interacts with DEPTOR, MLST8/GbetaL, RICTOR and RPTOR. Mg(2+) is required as a cofactor. In terms of processing, phosphorylated at Thr-221 by STK11/LKB1 in complex with STE20-related adapter-alpha (STRADA) pseudo kinase and CAB39. Phosphorylation at Thr-221 is inhibited in response to PTHLH/PTHrP. Phosphorylated at Thr-469 and Ser-551 in response to cAMP signaling. As to expression, expressed in chondrocytes.

It localises to the cytoplasm. It catalyses the reaction L-seryl-[protein] + ATP = O-phospho-L-seryl-[protein] + ADP + H(+). It carries out the reaction L-threonyl-[protein] + ATP = O-phospho-L-threonyl-[protein] + ADP + H(+). With respect to regulation, activated by phosphorylation on Thr-221. Its function is as follows. Positive regulator of mTOR signaling that functions by triggering the degradation of DEPTOR, an mTOR inhibitor. Involved in the dynamic regulation of mTOR signaling in chondrocyte differentiation during skeletogenesis. Negatively regulates cAMP signaling pathway possibly by acting on CRTC2/TORC2 and CRTC3/TORC3. Prevents HDAC4 translocation to the nucleus. The chain is Serine/threonine-protein kinase SIK3 from Homo sapiens (Human).